A 200-amino-acid polypeptide reads, in one-letter code: Recombination protein RecR (200 aa).

A C4-type zinc finger spans residues 58–73 (CSLCCNLTDEDPCSIC). The Toprim domain occupies 81–176 (NLLCVVEEPR…KVTRIAHGIP (96 aa)).

Belongs to the RecR family.

Its function is as follows. May play a role in DNA repair. It seems to be involved in an RecBC-independent recombinational process of DNA repair. It may act with RecF and RecO. This chain is Recombination protein RecR, found in Desulforamulus reducens (strain ATCC BAA-1160 / DSM 100696 / MI-1) (Desulfotomaculum reducens).